The chain runs to 156 residues: Probable chemoreceptor glutamine deamidase CheD (156 aa).

The protein belongs to the CheD family.

It carries out the reaction L-glutaminyl-[protein] + H2O = L-glutamyl-[protein] + NH4(+). Its function is as follows. Probably deamidates glutamine residues to glutamate on methyl-accepting chemotaxis receptors (MCPs), playing an important role in chemotaxis. This is Probable chemoreceptor glutamine deamidase CheD from Bdellovibrio bacteriovorus (strain ATCC 15356 / DSM 50701 / NCIMB 9529 / HD100).